Consider the following 250-residue polypeptide: tRNA pseudouridine synthase A (250 aa).

The active-site Nucleophile is Asp-52. Substrate is bound at residue Tyr-111.

Belongs to the tRNA pseudouridine synthase TruA family. In terms of assembly, homodimer.

The enzyme catalyses uridine(38/39/40) in tRNA = pseudouridine(38/39/40) in tRNA. In terms of biological role, formation of pseudouridine at positions 38, 39 and 40 in the anticodon stem and loop of transfer RNAs. The chain is tRNA pseudouridine synthase A from Methylorubrum extorquens (strain PA1) (Methylobacterium extorquens).